Reading from the N-terminus, the 502-residue chain is MAAPCEGQAFAVGVEKNWGAVVRSPEGTPQKIRQLIDEGIAPEEGGVDAQDTSATSQSVNGSPQAEQPSLESTSKEAFFSRVETFSSLKWAGKPPELSPLVCAKYGWVTVECDMLKCSSCQAFLCASLQPAFDFDRYKQRCAELKKALCTAHEKFCFWPDSPSPDRFGMLPLEEPAILVSEFLDRFQSLCHLDLQLPSLRPEDLKTMCLTEDKISLLLHLLEDELDHRTDERKTTTKLGSDIQVHVTACILSVCGWACSSSLEPMQLSLITCSQCMRKVGLWGFQQIESSMTDLDASFGLTSSPIPGLEGRPERLPLVPESPRRMMTRSQDATFFPGSEQAEKSPGPIVSRTRSWDSSSPVDRPEPEAASPTTRTRPVTRSMGTGDPSGLEVPSSPLRKAKRARLCSSSSSDTSSRSFFDPTSQHRDWCPWVNVTLGKESRENGGTEPDASAPAEPGWKAVLTILLAHKQSSQPAETDSMSLSEKSRKVFRIFRQWESLCSC.

Alanine 2 is subject to N-acetylalanine. Position 24 is a phosphoserine (serine 24). Threonine 28 carries the post-translational modification Phosphothreonine. A disordered region spans residues 35 to 74; sequence LIDEGIAPEEGGVDAQDTSATSQSVNGSPQAEQPSLESTS. The span at 50 to 72 shows a compositional bias: polar residues; the sequence is QDTSATSQSVNGSPQAEQPSLES. Phosphoserine is present on residues serine 58 and serine 62. Threonine 84 carries the phosphothreonine modification. The segment at 102–156 adopts a C3HC-type zinc-finger fold; that stretch reads CAKYGWVTVECDMLKCSSCQAFLCASLQPAFDFDRYKQRCAELKKALCTAHEKFC. The disordered stretch occupies residues 302-423; sequence SSPIPGLEGR…SSRSFFDPTS (122 aa). Phosphoserine occurs at positions 321 and 329. Threonine 333 carries the phosphothreonine modification. Phosphoserine is present on residues serine 338, serine 344, serine 354, serine 359, and serine 370. A compositionally biased stretch (polar residues) spans 351–360; it reads RTRSWDSSSP. A compositionally biased stretch (low complexity) spans 371 to 380; sequence PTTRTRPVTR. Serine 381 carries the phosphoserine modification. Position 384 is a phosphothreonine (threonine 384). Residue serine 395 is modified to Phosphoserine. Positions 396 to 402 match the Nuclear localization signal motif; it reads PLRKAKR. Phosphoserine is present on residues serine 407 and serine 483. Positions 407–422 are enriched in low complexity; that stretch reads SSSSSDTSSRSFFDPT.

As to quaternary structure, interacts with TPR; this interaction mediates ZC3HC1 nuclear envelopes (NE)-association but also required for proper positioning of a substantial amount of TPR at the nuclear basket (NB). In terms of processing, phosphorylated. May also be weakly phosphorylated on Tyr residues.

It is found in the nucleus. Its subcellular location is the nucleus envelope. Its function is as follows. Required for proper positioning of a substantial amount of TPR at the nuclear basket (NB) through interaction with TPR. The sequence is that of Zinc finger C3HC-type protein 1 (ZC3HC1) from Pongo abelii (Sumatran orangutan).